A 329-amino-acid polypeptide reads, in one-letter code: MINYPESLANRIIKGSTLDKDEANELLLLEGTDANALFLAASRVRDHFLGTGVDLCSIINAKSGRCPENCAFCAQSAHHATNAPVYPLVDEEQITACAREAAGAGSHCFGIVTSGSAISRGEELDRICRALRRIRRETAIEPSCSLGVIDYETALALREAGAVTYHHNLETARSFFPNVCTTHDYEEDVETVRVAKRAGLKVCCGGIFGLGETPEQRVEMALTLRELDVDSIPLNFLNPIEGTPLAGADRITPLECLKTIAVYRLILPDRKIAVCGGRERNLRDLQSWMFFAGASGTMIGNYLTTTGRPPEQDWQMLADLGLTVRQCNG.

The region spanning 48–278 (FLGTGVDLCS…DRKIAVCGGR (231 aa)) is the Radical SAM core domain. Positions 66, 70, and 73 each coordinate [4Fe-4S] cluster. [2Fe-2S] cluster-binding residues include S143 and C203.

The protein belongs to the radical SAM superfamily. Biotin synthase family. Homodimer. [4Fe-4S] cluster serves as cofactor. [2Fe-2S] cluster is required as a cofactor.

The catalysed reaction is (4R,5S)-dethiobiotin + (sulfur carrier)-SH + 2 reduced [2Fe-2S]-[ferredoxin] + 2 S-adenosyl-L-methionine = (sulfur carrier)-H + biotin + 2 5'-deoxyadenosine + 2 L-methionine + 2 oxidized [2Fe-2S]-[ferredoxin]. Its pathway is cofactor biosynthesis; biotin biosynthesis; biotin from 7,8-diaminononanoate: step 2/2. In terms of biological role, catalyzes the conversion of dethiobiotin (DTB) to biotin by the insertion of a sulfur atom into dethiobiotin via a radical-based mechanism. The polypeptide is Biotin synthase (Geobacter sulfurreducens (strain ATCC 51573 / DSM 12127 / PCA)).